We begin with the raw amino-acid sequence, 405 residues long: uncharacterized protein (405 aa).

13 consecutive transmembrane segments (helical) span residues 19–39 (IVSI…PLAV), 48–68 (MGFS…ATLL), 85–105 (IVVF…LADI), 106–126 (ASAW…ILGI), 129–149 (SFAG…LHIG), 156–176 (GIVT…CYAW), 178–198 (GLQG…LLAL), 224–244 (GMAL…ITLF), 252–272 (GAAF…LLFP), 283–303 (VAMI…TAAM), 309–329 (IGVL…GVVA), 344–364 (TYTV…GLVM), and 366–386 (WAGV…ALLL).

This sequence belongs to the major facilitator superfamily. YhhS family.

The protein resides in the cell inner membrane. This is an uncharacterized protein from Salmonella enteritidis PT4 (strain P125109).